A 624-amino-acid polypeptide reads, in one-letter code: MTSLHQVLYFIFFASVSSECVTKVFKDISFQGGDLSTVFTPSATYCRLVCTHHPRCLLFTFMAESSSDDPTKWFACILKDSVTEILPMVNMTGAISGYSFKQCPQQLSTCSKDVYVNLDMKGMNYNSSVVKNARECQERCTDDAHCQFFTYATGYFPSVDHRKMCLLKYTRTGTPTTITKLNGVVSGFSLKSCGLSNLACIRDIFPNTVLADLNIDSVVAPDAFVCRRICTHHPTCLFFTFFSQAWPKESQRHLCLLKTSESGLPSTRITKSHALSGFSLQHCRHSVPVFCHPSFYNDTDFLGEELDIVDVKGQETCQKTCTNNARCQFFTYYPSHRLCNERNRRGRCYLKLSSNGSPTRILHGRGGISGYSLRLCKMDNVCTTKINPRVVGGAASVHGEWPWQVTLHISQGHLCGGSIIGNQWILTAAHCFSGIETPKKLRVYGGIVNQSEINEGTAFFRVQEMIIHDQYTTAESGYDIALLKLESAMNYTDFQRPICLPSKGDRNAVHTECWVTGWGYTALRGEVQSTLQKAKVPLVSNEECQTRYRRHKITNKMICAGYKEGGKDTCKGDSGGPLSCKYNGVWHLVGITSWGEGCGQKERPGVYTNVAKYVDWILEKTQTV.

Positions 1–18 (MTSLHQVLYFIFFASVSS) are cleaved as a signal peptide. Apple domains are found at residues 20–103 (CVTK…FKQC), 110–193 (CSKD…LKSC), 200–283 (CIRD…LQHC), and 291–376 (CHPS…LRLC). Intrachain disulfides connect C20/C103, C46/C76, C50/C56, C110/C193, C136/C165, C140/C146, C200/C283, C226/C255, C230/C236, C291/C376, C317/C348, C321/C327, C382/C499, C415/C431, C513/C580, C544/C559, and C570/C598. N90 and N126 each carry an N-linked (GlcNAc...) asparagine glycan. N-linked (GlcNAc...) asparagine glycosylation is present at N297. A Peptidase S1 domain is found at 390–622 (VVGGAASVHG…YVDWILEKTQ (233 aa)). H430 functions as the Charge relay system in the catalytic mechanism. N449 carries N-linked (GlcNAc...) asparagine glycosylation. Catalysis depends on D479, which acts as the Charge relay system. A glycan (N-linked (GlcNAc...) asparagine) is linked at N490. 547–550 (RYRR) is a heparin binding site. S574 functions as the Charge relay system in the catalytic mechanism.

Belongs to the peptidase S1 family. Plasma kallikrein subfamily. Homodimer; disulfide-linked. After activation the heavy and light chains are also linked by a disulfide bond. Interacts (activated) with F9 (inactive and activated) in calcium-dependent manner. Forms a heterodimer with SERPINA5. Activated by factor XIIa (or XII), which cleaves each polypeptide after Arg-389 into the light chain, which contains the active site, and the heavy chain, which associates with high molecular weight (HMW) kininogen. Activated by F12 (activated); the presence of negatively charged surfaces accelerates activation. Activated by F2 (thrombin); the presence of negatively charged surfaces, such as polyphosphate and dextran sulfate, strongly accelerates activation. Autoactivated; the presence of negatively charged surfaces, such as polyphosphate and dextran sulfate, accelerates autoactivation and autolysis. Post-translationally, N-glycosylated on both chains. N-glycosylated sites mainly consist of nonfucosylated sialylated biantennary (in high abundance) and/or triantennary (in low abundance) complex structures.

The protein localises to the secreted. The catalysed reaction is Selective cleavage of Arg-|-Ala and Arg-|-Val bonds in factor IX to form factor IXa.. With respect to regulation, inhibited by SERPINA5. Factor XI triggers the middle phase of the intrinsic pathway of blood coagulation by activating factor IX. The chain is Coagulation factor XI (F11) from Mus musculus (Mouse).